We begin with the raw amino-acid sequence, 308 residues long: D-alanine--D-alanine ligase (308 aa).

In terms of domain architecture, ATP-grasp spans 105–302; the sequence is KAIFRSLGLA…FPDLCDRILD (198 aa). 133–188 is a binding site for ATP; sequence DLPFGLPCVVKPAGEGSSVGVHLVNAAAELGPACRDAAGYAGDVIVERYVKGTEVD. The Mg(2+) site is built by D256, E269, and N271.

Belongs to the D-alanine--D-alanine ligase family. It depends on Mg(2+) as a cofactor. Mn(2+) is required as a cofactor.

It localises to the cytoplasm. It catalyses the reaction 2 D-alanine + ATP = D-alanyl-D-alanine + ADP + phosphate + H(+). It functions in the pathway cell wall biogenesis; peptidoglycan biosynthesis. Functionally, cell wall formation. The chain is D-alanine--D-alanine ligase from Anaeromyxobacter dehalogenans (strain 2CP-C).